Consider the following 413-residue polypeptide: S-adenosylmethionine synthase (413 aa).

An ATP-binding site is contributed by His15. Asp17 contacts Mg(2+). Glu43 lines the K(+) pocket. L-methionine contacts are provided by Glu56 and Gln100. Residues Gln100–Glu110 are flexible loop. ATP-binding positions include Asp171 to Lys173, Lys248 to Phe249, Asp257, Arg263 to Lys264, Ala280, and Lys284. Asp257 contributes to the L-methionine binding site. Lys288 serves as a coordination point for L-methionine.

The protein belongs to the AdoMet synthase family. Homotetramer; dimer of dimers. It depends on Mg(2+) as a cofactor. The cofactor is K(+).

Its subcellular location is the cytoplasm. The enzyme catalyses L-methionine + ATP + H2O = S-adenosyl-L-methionine + phosphate + diphosphate. It functions in the pathway amino-acid biosynthesis; S-adenosyl-L-methionine biosynthesis; S-adenosyl-L-methionine from L-methionine: step 1/1. Functionally, catalyzes the formation of S-adenosylmethionine (AdoMet) from methionine and ATP. The overall synthetic reaction is composed of two sequential steps, AdoMet formation and the subsequent tripolyphosphate hydrolysis which occurs prior to release of AdoMet from the enzyme. This chain is S-adenosylmethionine synthase, found in Prochlorococcus marinus (strain AS9601).